The following is a 669-amino-acid chain: MSYSYEACFWDPNDNGVNILLGHISQGIRSCDSMILFFKQRSELEKDYARRLGAITGKLDKDIGTNMDYGKLNETFNVVLSVEKARAQSHSKQSEILFRQIYTDTKAFAANLQARYTTLSGKIERLRMDKFNKKKGCEVLQKKLQDAQIRFRDLQLNENNMIGAKRVEHNKRELLKWESNSQEYKVQLDVLKQEYKASQKFWIHEWAQLSCELQEMENARISFLQSKLQQFATSSMETYILEQTKMDMLTNHLNSFTAADEISTFSKENGTGRLKHKTSKGDMNSSANWAQMSSISTTSKKTESYMDNIRKLSSQLKETENKRKLASIDKYEKPLPSPEVTMATQFRNSTPVIRNETKVVANPTLSLRSSPVQLQSNVDDSVLRQKPDKPRPIVGEEQLKPDEDSKNPDEKGLMVHKRNQSLSSPSESSSSNPTDFSHIKKRQSMESMTTSVSSMANSIDDSQRFAKSWNSSNRKRKSMSHLQVPSSASSRSDDGGRTPNSAHNLNEDDYNTRRDTSTSTILFKPPVAVRGTSRGHTHRQSMIMQDSSNPIEDALYEMERIQSSSKPGTKTGNIMDERGVVRDRGITVTLPIVTSEGFPVIEYAKAMYPLIGNEAPGLANFHKGDYLLITEIVNKDWYKGEVYDNDRIDRNHRIGLIPYNFIQLLHQGL.

The region spanning 1-261 (MSYSYEACFW…HLNSFTAADE (261 aa)) is the F-BAR domain. The stretch at 134 to 200 (KKGCEVLQKK…LKQEYKASQK (67 aa)) forms a coiled coil. Residues serine 337 and serine 366 each carry the phosphoserine modification. Positions 372 to 518 (VQLQSNVDDS…DYNTRRDTST (147 aa)) are disordered. Basic and acidic residues-rich tracts occupy residues 381–391 (SVLRQKPDKPR) and 397–413 (EQLKPDEDSKNPDEKGL). Phosphoserine is present on serine 421. Low complexity-rich tracts occupy residues 421-431 (SLSSPSESSSS) and 445-455 (MESMTTSVSSM). The 69-residue stretch at 599-667 (PVIEYAKAMY…PYNFIQLLHQ (69 aa)) folds into the SH3 domain.

Interacts with INN1.

The protein resides in the cytoplasm. Its subcellular location is the cytoskeleton. The protein localises to the bud neck. In terms of biological role, throughout most of the cell cycle it forms a double ring that coincides with the septins. After the onset of mitosis, forms a ring-like structure which colocalizes with the medial actin ring. Mediates cytoskeletal rearrangements required for cytokinesis. In conjunction with the medial actin ring exhibits contraction-like action. The sequence is that of Cytokinesis protein 2 (HOF1) from Saccharomyces cerevisiae (strain ATCC 204508 / S288c) (Baker's yeast).